The primary structure comprises 227 residues: Flagellar L-ring protein (227 aa).

Positions 1–16 are cleaved as a signal peptide; that stretch reads MRNIILFAAGTLLLSG. The N-palmitoyl cysteine moiety is linked to residue Cys17. Cys17 is lipidated: S-diacylglycerol cysteine.

Belongs to the FlgH family. The basal body constitutes a major portion of the flagellar organelle and consists of four rings (L,P,S, and M) mounted on a central rod.

The protein localises to the cell outer membrane. The protein resides in the bacterial flagellum basal body. Functionally, assembles around the rod to form the L-ring and probably protects the motor/basal body from shearing forces during rotation. The sequence is that of Flagellar L-ring protein from Pseudoalteromonas translucida (strain TAC 125).